The following is a 58-amino-acid chain: RRRRRRGKGRGKKRKGKGKKRGKGRRRGSKGRKKKKGKGKKRKRRRRRRRKGSKGKGK.

Residues 1–58 (RRRRRRGKGRGKKRKGKGKKRGKGRRRGSKGRKKKKGKGKKRKRRRRRRRKGSKGKGK) are disordered.

Gonads.

It is found in the nucleus. It localises to the chromosome. Functionally, protamines substitute for histones in the chromatin of sperm during the haploid phase of spermatogenesis. They compact sperm DNA into a highly condensed, stable and inactive complex. This Bolinus brandaris (Purple dye murex) protein is Sperm protamine P2.